The primary structure comprises 277 residues: MSNDEIVAGIMRDYILNLLKEKKRIDDRGFEDYRPIEVEVGVIEKAEGSALVKLGNTQVLVGIKATLGEPFPDTPNMGVMTTNVELVPLASPTFEPGPPDERAIELARVIDRGIRESRALNLEKMVIAPGKIVRVVFIDVHVLDHDGNLMDAIGIGAIAALLNARVPKVLYNEETGEVEILEEKEPLPVEKIPISVTFAKIGNYLVVDPTLEEEQIMDGRLTITTDETGHISAVQKSEGGAFKLEEVMYAVETAFKKAEEIRKIILNALEKANNSEE.

Belongs to the RNase PH family. Rrp42 subfamily. As to quaternary structure, component of the archaeal exosome complex. Forms a hexameric ring-like arrangement composed of 3 Rrp41-Rrp42 heterodimers. The hexameric ring associates with a trimer of Rrp4 and/or Csl4 subunits.

It is found in the cytoplasm. Functionally, non-catalytic component of the exosome, which is a complex involved in RNA degradation. Contributes to the structuring of the Rrp41 active site. The polypeptide is Exosome complex component Rrp42 (Pyrococcus furiosus (strain ATCC 43587 / DSM 3638 / JCM 8422 / Vc1)).